The primary structure comprises 146 residues: Hemoglobin subunit beta (146 aa).

The residue at position 1 (Val-1) is an N-acetylvaline. Residues 2–146 enclose the Globin domain; the sequence is HLTGEEKAAV…VANALAHKYH (145 aa). The residue at position 12 (Thr-12) is a Phosphothreonine. Ser-44 carries the post-translational modification Phosphoserine. Lys-59 is subject to N6-acetyllysine. Position 63 (His-63) interacts with heme b. Lys-82 carries the post-translational modification N6-acetyllysine. A heme b-binding site is contributed by His-92. At Cys-93 the chain carries S-nitrosocysteine. Lys-144 is subject to N6-acetyllysine.

Belongs to the globin family. Heterotetramer of two alpha chains and two beta chains. Red blood cells.

Functionally, involved in oxygen transport from the lung to the various peripheral tissues. This Martes foina (Beech marten) protein is Hemoglobin subunit beta (HBB).